Here is a 133-residue protein sequence, read N- to C-terminus: Small ribosomal subunit protein uS11 (133 aa).

Residues 1-23 (MPPKTRGAVRKPRKKDKKNIALG) are disordered. Positions 7–17 (GAVRKPRKKDK) are enriched in basic residues.

Belongs to the universal ribosomal protein uS11 family. Part of the 30S ribosomal subunit. Interacts with proteins S7 and S18. Binds to IF-3.

In terms of biological role, located on the platform of the 30S subunit, it bridges several disparate RNA helices of the 16S rRNA. Forms part of the Shine-Dalgarno cleft in the 70S ribosome. This Pseudarthrobacter chlorophenolicus (strain ATCC 700700 / DSM 12829 / CIP 107037 / JCM 12360 / KCTC 9906 / NCIMB 13794 / A6) (Arthrobacter chlorophenolicus) protein is Small ribosomal subunit protein uS11.